Consider the following 815-residue polypeptide: Protein SEY1 homolog (815 aa).

Topologically, residues 1–737 (MRQIIDYDCN…IQSTGRQPQN (737 aa)) are cytoplasmic. The region spanning 28-260 (TLGFNVISIL…LPKDYTRRIP (233 aa)) is the GB1/RHD3-type G domain. Residue 38–45 (GCQSTGKS) participates in GTP binding. Positions 298–321 (AKDDILDGYKKSIKDLQKKMEKRE) form a coiled coil. Residues 738 to 758 (IPWWIYLLIIILGFDEITYVL) form a helical membrane-spanning segment. The Lumenal portion of the chain corresponds to 759–761 (TSP). A helical membrane pass occupies residues 762 to 782 (VLVTLLLLLASFIYSYLTGNF). Residues 783-815 (SSFCNYSQQFVIISTKILHYISGAIHSSLDNRK) lie on the Cytoplasmic side of the membrane.

This sequence belongs to the TRAFAC class dynamin-like GTPase superfamily. GB1/RHD3 GTPase family. RHD3 subfamily.

It is found in the endoplasmic reticulum membrane. In terms of biological role, probable GTP-binding protein that may be involved in cell development. This is Protein SEY1 homolog from Cryptosporidium hominis.